Reading from the N-terminus, the 240-residue chain is Uridylate kinase (240 aa).

Lysine 13–glycine 16 is a binding site for ATP. The involved in allosteric activation by GTP stretch occupies residues glycine 21–glycine 26. Glycine 55 lines the UMP pocket. ATP-binding residues include glycine 56 and arginine 60. UMP is bound by residues aspartate 75 and threonine 136–threonine 143. Positions 163, 164, 169, and 172 each coordinate ATP.

Belongs to the UMP kinase family. In terms of assembly, homohexamer.

The protein localises to the cytoplasm. The catalysed reaction is UMP + ATP = UDP + ADP. Its pathway is pyrimidine metabolism; CTP biosynthesis via de novo pathway; UDP from UMP (UMPK route): step 1/1. Its activity is regulated as follows. Allosterically activated by GTP. Inhibited by UTP. Catalyzes the reversible phosphorylation of UMP to UDP. The polypeptide is Uridylate kinase (Brucella suis biovar 1 (strain 1330)).